Here is a 114-residue protein sequence, read N- to C-terminus: Cytochrome c2 (114 aa).

Q1 is subject to Pyrrolidone carboxylic acid. The heme c site is built by C13, C16, H17, and M93.

The protein belongs to the cytochrome c family. Binds 1 heme c group covalently per subunit.

Its function is as follows. Cytochrome c2 is found mainly in purple, non-sulfur, photosynthetic bacteria where it functions as the electron donor to the oxidized bacteriochlorophyll in the photophosphorylation pathway. However, it may also have a role in the respiratory chain and is found in some non-photosynthetic bacteria. The protein is Cytochrome c2 (cycA) of Rhodopseudomonas palustris.